Here is a 163-residue protein sequence, read N- to C-terminus: Phosphopantetheine adenylyltransferase (163 aa).

Thr11 contributes to the substrate binding site. Residues 11–12 (TF) and His19 each bind ATP. Substrate contacts are provided by Lys43, Leu75, and Arg89. Residues 90-92 (GLR), Glu100, and 125-131 (YMFISAT) contribute to the ATP site.

Belongs to the bacterial CoaD family. As to quaternary structure, homohexamer. Requires Mg(2+) as cofactor.

It localises to the cytoplasm. The catalysed reaction is (R)-4'-phosphopantetheine + ATP + H(+) = 3'-dephospho-CoA + diphosphate. It functions in the pathway cofactor biosynthesis; coenzyme A biosynthesis; CoA from (R)-pantothenate: step 4/5. Functionally, reversibly transfers an adenylyl group from ATP to 4'-phosphopantetheine, yielding dephospho-CoA (dPCoA) and pyrophosphate. This Aromatoleum aromaticum (strain DSM 19018 / LMG 30748 / EbN1) (Azoarcus sp. (strain EbN1)) protein is Phosphopantetheine adenylyltransferase.